Here is a 1624-residue protein sequence, read N- to C-terminus: Latent-transforming growth factor beta-binding protein 4 (1624 aa).

Positions 1–27 (MPRPGTSGRRPLLLVLLLPLFAAATSA) are cleaved as a signal peptide. Residues 125–146 (RRPRGPGGRGLLRRRPPQRAPA) form a disordered region. The EGF-like 1 domain occupies 149–181 (APVLCPLICHNGGVCVKPDRCLCPPDFAGKFCQ). Cystine bridges form between Cys153–Cys163, Cys157–Cys169, Cys171–Cys180, Cys289–Cys311, Cys298–Cys324, and Cys312–Cys327. The 53-residue stretch at 287–339 (GYCFRELRGGECASPLPGLRTQEVCCRGAGLAWGVHDCQLCSERLGNSERVSA) folds into the TB 1 domain. Asn352 carries N-linked (GlcNAc...) asparagine glycosylation. An EGF-like 2; calcium-binding domain is found at 357–397 (DVDECATGGRCQHGECANTRGGYTCVCPDGFLLDSSRSSCI). Intrachain disulfides connect Cys361/Cys372, Cys367/Cys381, Cys383/Cys396, Cys409/Cys431, Cys418/Cys444, Cys432/Cys447, and Cys433/Cys459. Residues 407-459 (GPCFRVLRDGGCSLPILRNITKQICCCSRVGKAWGRGCQLCPPFGSEGFREIC) form the TB 2 domain. A glycan (N-linked (GlcNAc...) asparagine) is linked at Asn425. The disordered stretch occupies residues 474–546 (YNTRPLGQEP…PEIPESGPSS (73 aa)). The span at 487 to 500 (SLSQPRTLPATSRP) shows a compositional bias: polar residues. A compositionally biased stretch (basic and acidic residues) spans 508 to 522 (HRLEPRPEPRPDPRP). The EGF-like 3 domain maps to 545-586 (SSGMCQRNPQVCGPGRCISRPSGYTCACDSGFRLSPQGTRCI). Cystine bridges form between Cys549–Cys561, Cys556–Cys570, Cys572–Cys585, Cys591–Cys603, Cys598–Cys612, Cys614–Cys627, Cys633–Cys645, Cys640–Cys654, Cys656–Cys669, Cys675–Cys687, Cys682–Cys696, Cys698–Cys707, Cys714–Cys726, Cys721–Cys735, Cys737–Cys750, Cys756–Cys768, Cys763–Cys777, Cys779–Cys792, Cys838–Cys851, Cys845–Cys860, Cys862–Cys876, Cys882–Cys894, Cys888–Cys903, Cys905–Cys918, Cys924–Cys935, Cys930–Cys944, Cys946–Cys959, Cys1053–Cys1065, Cys1059–Cys1074, and Cys1076–Cys1089. In terms of domain architecture, EGF-like 4; calcium-binding spans 587 to 628 (DVDECRRVPPPCAPGRCENSPGSFRCVCGPGFRAGPRAAECL). An EGF-like 5; calcium-binding domain is found at 629–670 (DVDECHRVPPPCDLGRCENTPGSFLCVCPAGYQAAPHGASCQ). Residues 671–708 (DVDECTQSPGLCGRGACKNLPGSFRCVCPAGFRGSACE) form the EGF-like 6; calcium-binding domain. Residues 710–751 (DVDECAQEPPPCGPGRCDNTAGSFHCACPAGFRSRGPGAPCQ) form the EGF-like 7; calcium-binding domain. The region spanning 752–793 (DVDECARSPPPCTYGRCENTEGSFQCVCPMGFQPNTAGSECE) is the EGF-like 8; calcium-binding domain. The 44-residue stretch at 834-877 (DVDECSSGAPPCGPHGHCTNTEGSFRCSCAPGYRAPSGRPGPCA) folds into the EGF-like 9; calcium-binding domain. Residues 878–919 (DVNECLEGDFCFPHGECLNTDGSFACTCAPGYRPGPRGASCL) form the EGF-like 10; calcium-binding domain. In terms of domain architecture, EGF-like 11; calcium-binding spans 920–960 (DVDECSEEDLCQSGICTNTDGSFECICPPGHRAGPDLASCL). An EGF-like 12; calcium-binding domain is found at 1049–1090 (DVDECRNRSFCGAHAVCQNLPGSFQCLCDQGYEGARDGRHCV). An N-linked (GlcNAc...) asparagine glycan is attached at Asn1055. The segment at 1130–1179 (GRCVPPRTSAGTFPGSQPQAPASPVLPARPPPPPLPRRPSTPRQGPVGSG) is disordered. Positions 1138–1149 (SAGTFPGSQPQA) are enriched in polar residues. Residues 1156-1168 (PARPPPPPLPRRP) show a composition bias toward pro residues. The TB 3 domain occupies 1181 to 1235 (RECYFDTAAPDACDNILARNVTWQECCCTVGEGWGSGCRIQQCPGTETAEYQSLC). Disulfide bonds link Cys1183–Cys1206, Cys1193–Cys1218, Cys1207–Cys1223, Cys1208–Cys1235, Cys1257–Cys1270, Cys1265–Cys1279, Cys1281–Cys1294, Cys1300–Cys1312, Cys1307–Cys1321, and Cys1323–Cys1336. N-linked (GlcNAc...) asparagine glycosylation is present at Asn1200. The 43-residue stretch at 1253–1295 (DVDECQLFRDQVCKSGVCVNTAPGYSCYCSNGYYYHTQRLECI) folds into the EGF-like 13; calcium-binding domain. An EGF-like 14; calcium-binding domain is found at 1296–1337 (DNDECADEEPACEGGRCVNTVGSYHCTCEPPLVLDGSQRRCV). The N-linked (GlcNAc...) asparagine glycan is linked to Asn1339. The region spanning 1349–1402 (GVCWQEVGADLVCSHPRLDRQATYTECCCLYGEAWGMDCALCPAQDSDDFEALC) is the TB 4 domain. Disulfide bonds link Cys1351–Cys1375, Cys1361–Cys1387, Cys1376–Cys1390, and Cys1377–Cys1402. Pro residues predominate over residues 1446-1458 (ALPYDPYPPPPGP). The tract at residues 1446-1524 (ALPYDPYPPP…PPEGGSYAGS (79 aa)) is disordered. A compositionally biased stretch (basic and acidic residues) spans 1501–1510 (RSRDTRRSFP). EGF-like domains are found at residues 1533 to 1573 (EAEE…MACV) and 1574 to 1618 (DINE…HHCA). Disulfide bonds link Cys1537-Cys1548, Cys1543-Cys1557, Cys1559-Cys1572, Cys1578-Cys1593, Cys1588-Cys1602, and Cys1604-Cys1617.

Belongs to the LTBP family. As to quaternary structure, forms part of the large latent transforming growth factor beta precursor complex; removal is essential for activation of complex. Interacts with LTBP1 and TGFB1. Interacts with EFEMP2; this interaction promotes fibrillar deposition of EFEMP2. In terms of processing, contains hydroxylated asparagine residues. Highly expressed in heart, skeletal muscle, pancreas, uterus, and small intestine. Weakly expressed in placenta and lung.

The protein resides in the secreted. It localises to the extracellular space. It is found in the extracellular matrix. In terms of biological role, key regulator of transforming growth factor beta (TGFB1, TGFB2 and TGFB3) that controls TGF-beta activation by maintaining it in a latent state during storage in extracellular space. Associates specifically via disulfide bonds with the Latency-associated peptide (LAP), which is the regulatory chain of TGF-beta, and regulates integrin-dependent activation of TGF-beta. This chain is Latent-transforming growth factor beta-binding protein 4 (LTBP4), found in Homo sapiens (Human).